The chain runs to 233 residues: Large ribosomal subunit protein uL1 (233 aa).

Belongs to the universal ribosomal protein uL1 family. As to quaternary structure, part of the 50S ribosomal subunit.

Functionally, binds directly to 23S rRNA. The L1 stalk is quite mobile in the ribosome, and is involved in E site tRNA release. Protein L1 is also a translational repressor protein, it controls the translation of the L11 operon by binding to its mRNA. The polypeptide is Large ribosomal subunit protein uL1 (Parvibaculum lavamentivorans (strain DS-1 / DSM 13023 / NCIMB 13966)).